Here is a 181-residue protein sequence, read N- to C-terminus: Ribulose bisphosphate carboxylase small subunit, chloroplastic (181 aa).

A chloroplast-targeting transit peptide spans 1-54 (MASSMLSSAAVVTSQLQATMVAPFTGLKSSAAFPVTRKTNTDITSIASNGGRVS).

Belongs to the RuBisCO small chain family. As to quaternary structure, heterohexadecamer of 8 large and 8 small subunits.

Its subcellular location is the plastid. The protein resides in the chloroplast. RuBisCO catalyzes two reactions: the carboxylation of D-ribulose 1,5-bisphosphate, the primary event in carbon dioxide fixation, as well as the oxidative fragmentation of the pentose substrate. Both reactions occur simultaneously and in competition at the same active site. Although the small subunit is not catalytic it is essential for maximal activity. This Raphanus sativus (Radish) protein is Ribulose bisphosphate carboxylase small subunit, chloroplastic.